Reading from the N-terminus, the 129-residue chain is Small ribosomal subunit protein uS9 (129 aa).

The segment covering 104-113 (TRDSRVVERK) has biased composition (basic and acidic residues). The disordered stretch occupies residues 104–129 (TRDSRVVERKKPGKRKARRSRQFSKR). The span at 114–129 (KPGKRKARRSRQFSKR) shows a compositional bias: basic residues.

The protein belongs to the universal ribosomal protein uS9 family.

The sequence is that of Small ribosomal subunit protein uS9 from Sulfurimonas denitrificans (strain ATCC 33889 / DSM 1251) (Thiomicrospira denitrificans (strain ATCC 33889 / DSM 1251)).